The chain runs to 548 residues: Pentatricopeptide repeat-containing protein At5g15300 (548 aa).

11 PPR repeats span residues 76-110 (DVSI…GVSP), 111-145 (DRYT…GFVL), 146-176 (NEYV…SAKA), 177-211 (HKVA…DQVA), 212-238 (WNVM…FTEK), 239-273 (DVVT…GEHP), 274-308 (DVVT…ASVS), 314-348 (GTPI…DLST), 349-378 (WNTL…KVWP), 379-409 (NEVT…MRDM), and 415-445 (NIKH…MKIE). Residues 450-525 (VWRTLLGACK…PTGVSLIEED (76 aa)) are type E motif.

It belongs to the PPR family. PCMP-E subfamily.

In Arabidopsis thaliana (Mouse-ear cress), this protein is Pentatricopeptide repeat-containing protein At5g15300 (PCMP-E40).